A 366-amino-acid polypeptide reads, in one-letter code: Peroxisomal (S)-2-hydroxy-acid oxidase GLO4 (366 aa).

Residues 1–360 (MEDNLPVNVR…TRSHVMTEGD (360 aa)) enclose the FMN hydroxy acid dehydrogenase domain. Tyr27 is a binding site for a 2-oxocarboxylate. Residues 80–82 (PTG), Ser109, 130–132 (QLY), and Thr158 contribute to the FMN site. Tyr132 serves as a coordination point for a 2-oxocarboxylate. Arg167 is an a 2-oxocarboxylate binding site. The FMN site is built by Lys231 and Ser253. The active-site Proton acceptor is the His255. An a 2-oxocarboxylate-binding site is contributed by Arg258. Residues 286 to 290 (DGGIR) and 309 to 310 (XX) contribute to the FMN site. The short motif at 364–366 (SLL) is the Microbody targeting signal element.

It belongs to the FMN-dependent alpha-hydroxy acid dehydrogenase family. As to quaternary structure, homotetramer. It depends on FMN as a cofactor.

The protein resides in the peroxisome. It catalyses the reaction a (2S)-2-hydroxycarboxylate + O2 = a 2-oxocarboxylate + H2O2. It functions in the pathway lipid metabolism; fatty acid metabolism. Functionally, oxidase that catalyzes the oxidation of a broad range of 2-hydroxyacids to the corresponding 2-oxoacids, with a reduction of O2 to H2O2. May be involved in a general medium- and long-chain fatty acid catabolic pathway such as alpha-oxidation. The polypeptide is Peroxisomal (S)-2-hydroxy-acid oxidase GLO4 (GLO4) (Oryza sativa subsp. indica (Rice)).